The chain runs to 60 residues: Cytotoxin sagitoxin (60 aa).

4 disulfide bridges follow: Cys-3–Cys-21, Cys-14–Cys-38, Cys-42–Cys-53, and Cys-54–Cys-59.

This sequence belongs to the three-finger toxin family. Short-chain subfamily. Type IA cytotoxin sub-subfamily. Monomer in solution; Homodimer and oligomer (homohexamer) in the presence of negatively charged lipids forming a pore with a size ranging between 20 and 30 Angstroms. In terms of tissue distribution, expressed by the venom gland.

The protein resides in the secreted. The protein localises to the target cell membrane. Shows cytolytic activity on many different cells by forming pore in lipid membranes. In vivo, increases heart rate or kill the animal by cardiac arrest. In addition, it binds to heparin with high affinity, interacts with Kv channel-interacting protein 1 (KCNIP1) in a calcium-independent manner, and binds to integrin alpha-V/beta-3 (ITGAV/ITGB3) with moderate affinity. The polypeptide is Cytotoxin sagitoxin (Naja sagittifera (Andaman cobra)).